The following is a 177-amino-acid chain: Transmembrane protein 190 (177 aa).

The signal sequence occupies residues 1–21 (MLGCGIPALGLLLLLQGSADG). Residues 22–81 (NGIQGFFYPWSCEGDIWDRESCGGQAAIDSPNLCLRLRCCYRNGVCYHQRPDENVRRKHM) are Extracellular-facing. Residues 31–71 (WSCEGDIWDRESCGGQAAIDSPNLCLRLRCCYRNGVCYHQR) enclose the P-type domain. 3 cysteine pairs are disulfide-bonded: cysteine 33/cysteine 61, cysteine 43/cysteine 60, and cysteine 55/cysteine 67. Residues 82-102 (WALVWTCSGLLLLSCSICLFW) traverse the membrane as a helical segment. At 103-177 (WAKRRDVLHM…EETEGEEEED (75 aa)) the chain is on the cytoplasmic side. Residues 131-177 (KHRGTKKTPSTGSVPVALSKESRDVEGGTEGEGTEEGEETEGEEEED) form a disordered region. Residues 157 to 177 (GGTEGEGTEEGEETEGEEEED) show a composition bias toward acidic residues.

The protein resides in the membrane. This Homo sapiens (Human) protein is Transmembrane protein 190 (TMEM190).